The following is a 553-amino-acid chain: RNA N(6)-adenosine-methyltransferase METTL16 (553 aa).

The segment at 17 to 20 (PPDF) is RNA-binding. The S-adenosyl-L-methionine site is built by Arg82, Gly110, Ser114, Glu133, Thr164, and Asn184. The interval 163–167 (KTLLM) is K-loop. RNA-binding stretches follow at residues 199 to 211 (SRNSRRPPPSSVN), 250 to 254 (GKKCS), and 277 to 283 (QGRTMRW). Residues 289–400 (FYDDVTVPSP…QLREVPRAPE (112 aa)) are VCR 1. Ser329, Ser425, and Ser429 each carry phosphoserine. The disordered stretch occupies residues 457–496 (EETPEATEDERDEERGGMEAMESCKGSSNGAQDGEASEKG). The span at 458-468 (ETPEATEDERD) shows a compositional bias: acidic residues. The residue at position 463 (Thr463) is a Phosphothreonine. The VCR 2 stretch occupies residues 506–553 (YLFKCLVNIKKEAGDAVVEMHWVEGQNRDLMNQLCTYVRNQILRLVAS).

The protein belongs to the methyltransferase superfamily. METTL16/RlmF family. As to quaternary structure, interacts with MEPCE. Interacts with LARP7.

The protein resides in the nucleus. It localises to the cytoplasm. It carries out the reaction adenosine in U6 snRNA + S-adenosyl-L-methionine = N(6)-methyladenosine in U6 snRNA + S-adenosyl-L-homocysteine + H(+). The catalysed reaction is an adenosine in mRNA + S-adenosyl-L-methionine = an N(6)-methyladenosine in mRNA + S-adenosyl-L-homocysteine + H(+). With respect to regulation, methyltransferase activity is autoinhibited by the K-loop region that blocks S-adenosyl-L-methionine-binding. Upon activation, K-loop changes conformation, allowing S-adenosyl-L-methionine-binding and subsequent methyltransferase activity. mRNA N6-adenosine-methyltransferase activity is inhibited by zinc. Its function is as follows. RNA N6-methyltransferase that methylates adenosine residues at the N(6) position of a subset of RNAs and is involved in S-adenosyl-L-methionine homeostasis by regulating expression of MAT2A transcripts. Able to N6-methylate a subset of mRNAs and U6 small nuclear RNAs (U6 snRNAs). In contrast to the METTL3-METTL14 heterodimer, only able to methylate a limited number of RNAs: requires both a 5'UACAGAGAA-3' nonamer sequence and a specific RNA structure. Plays a key role in S-adenosyl-L-methionine homeostasis by mediating N6-methylation of MAT2A mRNAs, altering splicing of MAT2A transcripts: in presence of S-adenosyl-L-methionine, binds the 3'-UTR region of MAT2A mRNA and specifically N6-methylates the first hairpin of MAT2A mRNA, preventing recognition of their 3'-splice site by U2AF1/U2AF35, thereby inhibiting splicing and protein production of S-adenosylmethionine synthase. In S-adenosyl-L-methionine-limiting conditions, binds the 3'-UTR region of MAT2A mRNA but stalls due to the lack of a methyl donor, preventing N6-methylation and promoting expression of MAT2A. In addition to mRNAs, also able to mediate N6-methylation of U6 small nuclear RNA (U6 snRNA): specifically N6-methylates adenine in position 43 of U6 snRNAs. Also able to bind various lncRNAs, such as 7SK snRNA (7SK RNA) or 7SL RNA. Specifically binds the 3'-end of the MALAT1 long non-coding RNA. In Mus musculus (Mouse), this protein is RNA N(6)-adenosine-methyltransferase METTL16.